A 614-amino-acid polypeptide reads, in one-letter code: ATP-dependent rRNA helicase SPB4 (614 aa).

The Q motif motif lies at 10-38 (WSVLKCDLHPWIKEAIKSLGYPTMTPVQA). A Helicase ATP-binding domain is found at 41–233 (IPLFSGNKDV…RTGMANPVKI (193 aa)). 54–61 (AVTGSGKT) lines the ATP pocket. A DEAD box motif is present at residues 181-184 (DEAD). The 172-residue stretch at 260 to 431 (KISALIALIK…KFQKKFRKYM (172 aa)) folds into the Helicase C-terminal domain. Residues 510–581 (EYADKQKEES…IEKQLMDDSS (72 aa)) adopt a coiled-coil conformation. Residues 514–529 (KQKEESRKKNLEEDKA) are compositionally biased toward basic and acidic residues. The interval 514 to 614 (KQKEESRKKN…DSMQGSFDDL (101 aa)) is disordered. Positions 530–541 (RKVHDAKKRKEL) are enriched in basic residues. Basic and acidic residues-rich tracts occupy residues 551–563 (KTDKIETKQERRE) and 584–595 (EETKVDWKEMVK). Residues 604-614 (SDSMQGSFDDL) show a composition bias toward polar residues.

It belongs to the DEAD box helicase family. DDX55/SPB4 subfamily. In terms of assembly, component of pre-60S ribosomal complexes.

The protein localises to the nucleus. The protein resides in the nucleolus. It carries out the reaction ATP + H2O = ADP + phosphate + H(+). Its function is as follows. ATP-binding RNA helicase involved in the biogenesis of 60S ribosomal subunits. Binds 90S pre-ribosomal particles and dissociates from pre-60S ribosomal particles after processing of 27SB pre-rRNA. Required for the normal formation of 18S rRNA through the processing of pre-rRNAs at sites A0, A1 and A2, and the normal formation of 25S and 5.8S rRNAs through the processing of pre-rRNAs at sites C1 and C2. In Debaryomyces hansenii (strain ATCC 36239 / CBS 767 / BCRC 21394 / JCM 1990 / NBRC 0083 / IGC 2968) (Yeast), this protein is ATP-dependent rRNA helicase SPB4.